Reading from the N-terminus, the 163-residue chain is Large ribosomal subunit protein uL22c (163 aa).

It belongs to the universal ribosomal protein uL22 family. In terms of assembly, part of the 50S ribosomal subunit.

Its subcellular location is the plastid. It localises to the chloroplast. Its function is as follows. This protein binds specifically to 23S rRNA. Functionally, the globular domain of the protein is located near the polypeptide exit tunnel on the outside of the subunit, while an extended beta-hairpin is found that lines the wall of the exit tunnel in the center of the 70S ribosome. The sequence is that of Large ribosomal subunit protein uL22c (rpl22) from Lobularia maritima (Sweet alyssum).